The chain runs to 193 residues: Oleosin S1-2 (193 aa).

An N-acetylalanine modification is found at Ala-2. The polar stretch occupies residues 2-39 (ADVRTHAHQVQVHPLRQHEGGIKVVYPQSGPSSTQVLA). Helical transmembrane passes span 37-57 (VLAV…AGLT), 66-86 (ILAF…AFVI), and 87-107 (GLAM…LSSM). Residues 40 to 113 (VVAGVPVGGT…LSSMSWVLNH (74 aa)) are hydrophobic. Residues 139–193 (AGQRTKDAGQTIEDKAHDVRESKTYDVRDRDTKGHTASGGDRDTKTTREVRVATT) form a disordered region. A compositionally biased stretch (basic and acidic residues) spans 142-193 (RTKDAGQTIEDKAHDVRESKTYDVRDRDTKGHTASGGDRDTKTTREVRVATT).

The protein belongs to the oleosin family.

The protein localises to the lipid droplet. The protein resides in the membrane. May have a structural role to stabilize the lipid body during desiccation of the seed by preventing coalescence of the oil. Probably interacts with both lipid and phospholipid moieties of lipid bodies. May also provide recognition signals for specific lipase anchorage in lipolysis during seedling growth. This chain is Oleosin S1-2 (S1), found in Brassica napus (Rape).